A 610-amino-acid polypeptide reads, in one-letter code: UvrABC system protein C (610 aa).

Positions 16 to 94 (SQPGVYRMYD…IKLYQPRYNV (79 aa)) constitute a GIY-YIG domain. Positions 204–239 (DQVLTQLIARMEKASQNLEFEEAARIRDQIQAVRRV) constitute a UVR domain.

This sequence belongs to the UvrC family. Interacts with UvrB in an incision complex.

It is found in the cytoplasm. Functionally, the UvrABC repair system catalyzes the recognition and processing of DNA lesions. UvrC both incises the 5' and 3' sides of the lesion. The N-terminal half is responsible for the 3' incision and the C-terminal half is responsible for the 5' incision. This is UvrABC system protein C from Escherichia fergusonii (strain ATCC 35469 / DSM 13698 / CCUG 18766 / IAM 14443 / JCM 21226 / LMG 7866 / NBRC 102419 / NCTC 12128 / CDC 0568-73).